The sequence spans 437 residues: UDP-N-acetylmuramate--L-alanine ligase (437 aa).

Residue G108–S114 coordinates ATP.

Belongs to the MurCDEF family.

It localises to the cytoplasm. The enzyme catalyses UDP-N-acetyl-alpha-D-muramate + L-alanine + ATP = UDP-N-acetyl-alpha-D-muramoyl-L-alanine + ADP + phosphate + H(+). It functions in the pathway cell wall biogenesis; peptidoglycan biosynthesis. Cell wall formation. The chain is UDP-N-acetylmuramate--L-alanine ligase from Staphylococcus aureus (strain MRSA252).